The following is a 240-amino-acid chain: uncharacterized protein (240 aa).

Transmembrane regions (helical) follow at residues Ala16–Pro36 and Phe67–Met87.

Its subcellular location is the cell membrane. This is an uncharacterized protein from Bacillus subtilis (strain 168).